Here is a 394-residue protein sequence, read N- to C-terminus: Phosphoglycerate kinase (394 aa).

Residues Asp-21–Asn-23, Arg-36, His-59–Arg-62, Arg-118, and Arg-151 each bind substrate. Ser-183 carries the phosphoserine modification. ATP contacts are provided by Lys-201 and Gly-292. At Thr-299 the chain carries Phosphothreonine. Residues Glu-323 and Gly-350 to Ser-353 contribute to the ATP site.

It belongs to the phosphoglycerate kinase family. Monomer.

It localises to the cytoplasm. The catalysed reaction is (2R)-3-phosphoglycerate + ATP = (2R)-3-phospho-glyceroyl phosphate + ADP. Its pathway is carbohydrate degradation; glycolysis; pyruvate from D-glyceraldehyde 3-phosphate: step 2/5. The polypeptide is Phosphoglycerate kinase (Bacillus thuringiensis (strain Al Hakam)).